We begin with the raw amino-acid sequence, 243 residues long: Ribonuclease 3 (243 aa).

The RNase III domain maps to 15-144 (NDTISKIINY…LIGAIYIDGG (130 aa)). Residue E57 coordinates Mg(2+). D61 is a catalytic residue. Mg(2+) contacts are provided by N130 and E133. Residue E133 is part of the active site. Positions 169-238 (DPKTSLQEWT…AELMLEKINN (70 aa)) constitute a DRBM domain.

The protein belongs to the ribonuclease III family. In terms of assembly, homodimer. It depends on Mg(2+) as a cofactor.

The protein localises to the cytoplasm. It carries out the reaction Endonucleolytic cleavage to 5'-phosphomonoester.. Digests double-stranded RNA. Involved in the processing of primary rRNA transcript to yield the immediate precursors to the large and small rRNAs (23S and 16S). Processes some mRNAs, and tRNAs when they are encoded in the rRNA operon. Processes pre-crRNA and tracrRNA of type II CRISPR loci if present in the organism. The polypeptide is Ribonuclease 3 (Wolbachia sp. subsp. Brugia malayi (strain TRS)).